A 331-amino-acid polypeptide reads, in one-letter code: MTIKVGINGFGRIGRIVFRAAQKRSDIEIVAINDLLDADYMAYMLKYDSTHGRFDGTVEVKDGHLIVNGKKIRVTAERDPANLKWDEVGVDVVAEATGIFLTDETARKHITAGAKKVVLTGPSKDNTPMFVKGANFDKYAGQDIVSNASCTTNCLAPLAKVINDNFGIIEGLMTTVHATTATQKTVDGPSHKDWRGGRGASQNIIPSSTGAAKAVGKVLPELNGKLTGMAFRVPTPNVSVVDLTVRLEKPATYEQIKAAVKAAAEGEMKGVLGYTEDDVVSTDFNGEVCTSVFDAKAGIALNDNFVKLVSWYDNETGYSNKVLDLIAHISK.

NAD(+) is bound by residues 12–13 (RI), Asp34, Arg78, and Thr120. Residues 149 to 151 (SCT), Thr180, 209 to 210 (TG), and Arg232 each bind D-glyceraldehyde 3-phosphate. Catalysis depends on Cys150, which acts as the Nucleophile. Asn314 serves as a coordination point for NAD(+).

Belongs to the glyceraldehyde-3-phosphate dehydrogenase family. Homotetramer.

The protein resides in the cytoplasm. The enzyme catalyses D-glyceraldehyde 3-phosphate + phosphate + NAD(+) = (2R)-3-phospho-glyceroyl phosphate + NADH + H(+). Its pathway is carbohydrate degradation; glycolysis; pyruvate from D-glyceraldehyde 3-phosphate: step 1/5. Functionally, catalyzes the oxidative phosphorylation of glyceraldehyde 3-phosphate (G3P) to 1,3-bisphosphoglycerate (BPG) using the cofactor NAD. The first reaction step involves the formation of a hemiacetal intermediate between G3P and a cysteine residue, and this hemiacetal intermediate is then oxidized to a thioester, with concomitant reduction of NAD to NADH. The reduced NADH is then exchanged with the second NAD, and the thioester is attacked by a nucleophilic inorganic phosphate to produce BPG. The chain is Glyceraldehyde-3-phosphate dehydrogenase (gapA) from Escherichia fergusonii (strain ATCC 35469 / DSM 13698 / CCUG 18766 / IAM 14443 / JCM 21226 / LMG 7866 / NBRC 102419 / NCTC 12128 / CDC 0568-73).